Here is a 128-residue protein sequence, read N- to C-terminus: Transcription antitermination protein NusB (128 aa).

The protein belongs to the NusB family.

Functionally, involved in transcription antitermination. Required for transcription of ribosomal RNA (rRNA) genes. Binds specifically to the boxA antiterminator sequence of the ribosomal RNA (rrn) operons. This Staphylococcus carnosus (strain TM300) protein is Transcription antitermination protein NusB.